The following is a 211-amino-acid chain: Urease accessory protein UreF (211 aa).

The protein belongs to the UreF family. In terms of assembly, ureD, UreF and UreG form a complex that acts as a GTP-hydrolysis-dependent molecular chaperone, activating the urease apoprotein by helping to assemble the nickel containing metallocenter of UreC. The UreE protein probably delivers the nickel.

It localises to the cytoplasm. In terms of biological role, required for maturation of urease via the functional incorporation of the urease nickel metallocenter. The protein is Urease accessory protein UreF of Mycobacterium sp. (strain JLS).